The following is a 312-amino-acid chain: Malate dehydrogenase (312 aa).

NAD(+) is bound by residues 7–13 (GAAGGIG) and Asp34. 2 residues coordinate substrate: Arg81 and Arg87. NAD(+) contacts are provided by residues Asn94 and 117 to 119 (ITN). Asn119 and Arg153 together coordinate substrate. Residue His177 is the Proton acceptor of the active site. Met227 is an NAD(+) binding site.

It belongs to the LDH/MDH superfamily. MDH type 1 family. In terms of assembly, homodimer.

It catalyses the reaction (S)-malate + NAD(+) = oxaloacetate + NADH + H(+). Catalyzes the reversible oxidation of malate to oxaloacetate. The chain is Malate dehydrogenase from Salmonella gallinarum (strain 287/91 / NCTC 13346).